The following is a 194-amino-acid chain: Thymidine kinase (194 aa).

ATP-binding positions include 9–16 and 85–88; these read GAMNSGKT and DECQ. Catalysis depends on glutamate 86, which acts as the Proton acceptor. Cysteine 143, cysteine 146, cysteine 180, and histidine 183 together coordinate Zn(2+).

It belongs to the thymidine kinase family. In terms of assembly, homotetramer.

Its subcellular location is the cytoplasm. It catalyses the reaction thymidine + ATP = dTMP + ADP + H(+). The sequence is that of Thymidine kinase from Enterococcus faecalis (strain ATCC 700802 / V583).